A 230-amino-acid chain; its full sequence is Large ribosomal subunit protein uL1 (230 aa).

The protein belongs to the universal ribosomal protein uL1 family. In terms of assembly, part of the 50S ribosomal subunit.

In terms of biological role, binds directly to 23S rRNA. The L1 stalk is quite mobile in the ribosome, and is involved in E site tRNA release. Its function is as follows. Protein L1 is also a translational repressor protein, it controls the translation of the L11 operon by binding to its mRNA. This Rubrobacter xylanophilus (strain DSM 9941 / JCM 11954 / NBRC 16129 / PRD-1) protein is Large ribosomal subunit protein uL1.